Here is a 408-residue protein sequence, read N- to C-terminus: FAD-dependent monooxygenase nscC (408 aa).

An N-terminal signal peptide occupies residues 1–20 (MAPPLPILIIGAGISGLTTA). Glu34 and Ala45 together coordinate FAD. 2 N-linked (GlcNAc...) asparagine glycosylation sites follow: Asn91 and Asn103. FAD is bound at residue Arg119. Asn170 and Asn231 each carry an N-linked (GlcNAc...) asparagine glycan. 2 residues coordinate FAD: Asp328 and Gly341.

It belongs to the paxM FAD-dependent monooxygenase family. FAD is required as a cofactor.

The protein operates within secondary metabolite biosynthesis. Functionally, FAD-dependent monooxygenase; part of the gene cluster that mediates the biosynthesis of neosartoricin, a prenylated anthracenone that exhibits T-cell antiproliferative activity, suggestive of a physiological role as an immunosuppressive agent. The non-reducing polyketide synthase nscA probably synthesizes and cyclizes the decaketide backbone. The hydrolase nscB then mediates the product release through hydrolysis followed by spontaneous decarboxylation. The prenyltransferase nscD catalyzes the addition of the dimethylallyl group to the aromatic C5. The FAD-dependent monooxygenase nscC is then responsible for the stereospecific hydroxylation at C2. There is no gene encoding O-acetyltransferase in the nsc gene cluster; thus, the last step of 2-O-acetylation leading to neosartoricin may be catalyzed by an unidentified O-acetyltransferase. The chain is FAD-dependent monooxygenase nscC from Neosartorya fischeri (strain ATCC 1020 / DSM 3700 / CBS 544.65 / FGSC A1164 / JCM 1740 / NRRL 181 / WB 181) (Aspergillus fischerianus).